A 451-amino-acid polypeptide reads, in one-letter code: TERF1-interacting nuclear factor 2 (451 aa).

Ala-2 is subject to N-acetylalanine. Residues 229–257 (NPLPKAKPGTHLPQGPSSRTHPEPLAGRH) form a disordered region. A TBM motif is present at residues 256–278 (RHFNLAPLGRRRVQSQWASTRGG). The Nuclear localization signal signature appears at 262–268 (PLGRRRV). At Ser-295 the chain carries Phosphoserine. Residues Lys-302, Lys-306, Lys-341, and Lys-353 each participate in a glycyl lysine isopeptide (Lys-Gly) (interchain with G-Cter in SUMO2) cross-link.

In terms of assembly, monomer. Found in a complex with POT1; TERF1 and TNKS1. Component of the shelterin complex (telosome) composed of TERF1, TERF2, TINF2, TERF2IP ACD and POT1. Interacts with TERF1, TERF2 and ACD. Detected in heart, brain, placenta, lung, liver, skeletal muscle, kidney and pancreas.

It localises to the nucleus. Its subcellular location is the chromosome. It is found in the telomere. The protein resides in the nucleus matrix. In terms of biological role, component of the shelterin complex (telosome) that is involved in the regulation of telomere length and protection. Shelterin associates with arrays of double-stranded TTAGGG repeats added by telomerase and protects chromosome ends; without its protective activity, telomeres are no longer hidden from the DNA damage surveillance and chromosome ends are inappropriately processed by DNA repair pathways. Plays a role in shelterin complex assembly. Isoform 1 may have additional role in tethering telomeres to the nuclear matrix. This Homo sapiens (Human) protein is TERF1-interacting nuclear factor 2 (TINF2).